Consider the following 548-residue polypeptide: MAEQQTTELTNIDLEAGSEWRFELEADENIALRTLSSDPVFINSQELTPSAWYPIYRHTKSALYAPTSARIQVTNLPASHYTSTSTVQPQLLNLHLAMERQRILSKRGMEQRGPRVMIMGPQSSGKTTVMKNLVNLALGTGMGWTPGAIGLDPSSPPNLIPGSLSISTPSHPIPTHHLAHPLGSPPASTAANTISGDVETASWWLGALEPTNKNAEVWRVLVEHMAEAWGMRCEKDKIANISGLFLDTPAAFTVPTLGTKKDDPKARYTLVSHAIQAFDIDTIIVIGHEKLHIDLSRLPLVQSRQLNVIRIPKSGGAVDLDDHDRETAHIFQVRTYFYGEPPLPPQISSLVGKMVSLDFELSPYSFQIPWSRLVVLRVGEENSAPSSALPLGSSKILSPLRLTRVDPSGPGHVVRLLNRVLALVDVKPEDRIVPAKESEVKEEVKEEKNEKDGEIKQDGEGEKKGEGKGEGEGEGEGKYGEEEGEAEGEDDEEEVPFREEIGTREVMGFIVITAIDTFARKYTVLSPTPGRLPTTVAIAGAIEWVDSA.

ATP is bound by residues Glu19, Lys60, and 123 to 128; that span reads SSGKTT. The span at 437–481 shows a compositional bias: basic and acidic residues; sequence ESEVKEEVKEEKNEKDGEIKQDGEGEKKGEGKGEGEGEGEGKYGE. The disordered stretch occupies residues 437 to 500; the sequence is ESEVKEEVKE…DEEEVPFREE (64 aa). The segment covering 482–494 has biased composition (acidic residues); sequence EEGEAEGEDDEEE.

The protein belongs to the Clp1 family. Clp1 subfamily. In terms of assembly, component of a pre-mRNA cleavage factor complex. Interacts directly with PCF11.

Its subcellular location is the nucleus. Its function is as follows. Required for endonucleolytic cleavage during polyadenylation-dependent pre-mRNA 3'-end formation. This chain is mRNA cleavage and polyadenylation factor CLP1, found in Cryptococcus neoformans var. neoformans serotype D (strain B-3501A) (Filobasidiella neoformans).